The primary structure comprises 621 residues: UvrABC system protein C (621 aa).

The GIY-YIG domain occupies 13-92 (EKPGVYMMRN…IKENRPKYNV (80 aa)). In terms of domain architecture, UVR spans 205 to 240 (DELVRKIEEKMKAAAISMDFENAARYRDQIIALNNI).

This sequence belongs to the UvrC family. As to quaternary structure, interacts with UvrB in an incision complex.

The protein resides in the cytoplasm. The UvrABC repair system catalyzes the recognition and processing of DNA lesions. UvrC both incises the 5' and 3' sides of the lesion. The N-terminal half is responsible for the 3' incision and the C-terminal half is responsible for the 5' incision. This is UvrABC system protein C from Alkaliphilus oremlandii (strain OhILAs) (Clostridium oremlandii (strain OhILAs)).